A 276-amino-acid chain; its full sequence is MSIQNAARRKTAPEIFARKSGEPIVMLTSYHAHTAALVDKYCDIILVGDSLGNVMHGFETTVPVTLEMMILQGHAVMRGSKQALVVVDMPFGSYEASKEQAFHSAARVLKETGCGAIKVEGGQRMAETIAFLVNRGVPVMGHVGLTPQSINTLGSFRARGRDEADSAMILEDAKAVSEAGAFSIVVEAVAEPLGRKITEAVAAPTIGIGASVACDGQVLVLEDMLGLSPWAPKFVKRYGDLGPGIEKAIQDYADEVRSRAFPGPEHVYNLKPKAAK.

Mg(2+) contacts are provided by Asp-49 and Asp-88. 3-methyl-2-oxobutanoate contacts are provided by residues Asp-49–Ser-50, Asp-88, and Lys-118. Mg(2+) is bound at residue Glu-120. Glu-187 (proton acceptor) is an active-site residue.

Belongs to the PanB family. As to quaternary structure, homodecamer; pentamer of dimers. The cofactor is Mg(2+).

Its subcellular location is the cytoplasm. The enzyme catalyses 3-methyl-2-oxobutanoate + (6R)-5,10-methylene-5,6,7,8-tetrahydrofolate + H2O = 2-dehydropantoate + (6S)-5,6,7,8-tetrahydrofolate. The protein operates within cofactor biosynthesis; (R)-pantothenate biosynthesis; (R)-pantoate from 3-methyl-2-oxobutanoate: step 1/2. Its function is as follows. Catalyzes the reversible reaction in which hydroxymethyl group from 5,10-methylenetetrahydrofolate is transferred onto alpha-ketoisovalerate to form ketopantoate. The chain is 3-methyl-2-oxobutanoate hydroxymethyltransferase from Afipia carboxidovorans (strain ATCC 49405 / DSM 1227 / KCTC 32145 / OM5) (Oligotropha carboxidovorans).